The sequence spans 33 residues: Maurocalcin (33 aa).

3 disulfides stabilise this stretch: Cys-3–Cys-17, Cys-10–Cys-21, and Cys-16–Cys-32. Residues 22–24 (KRR) are essential for stimulation of [3H]ryanodine binding to RYR.

The protein belongs to the scorpion calcin family. Post-translationally, the non-natural D-maurocalcin (a chiral analog of maurocalcin composed of D-amino acids) completely loses the ability to stimulate [3H]ryanodine binding and calcium release. Its protease resistance, combined with its efficient cell penetration at concentrations devoid of cell toxicity, suggests that it should be an excellent vector for in vivo applications. As to expression, expressed by the venom gland.

The protein resides in the secreted. Its function is as follows. This toxin stabilizes ryanodine receptor 1 (RyR1) opening in a long-lasting subconductance state (48%-60% of the full conductance state). Furthermore, it triggers calcium release from sarcoplasmic vesicles (6.6 nM are enough to induce a sharp release, and 60% of the total calcium is released after toxin (100 nM) addition) probably by acting as a cell-penetrating peptide (CPP). In addition, it has been shown to dose-dependently stimulate ryanodine binding to RyR1 (EC(50)=12.5-26.4 nM). It also augments the bell-shaped calcium-[3H]ryanodine binding curve that is maximal at about 10 uM calcium concentration. It binds a different site as ryanodine. It acts synergistically with caffeine. In vivo, intracerebroventricular injection into mice causes death. The chain is Maurocalcin from Scorpio palmatus (Israeli golden scorpion).